The chain runs to 290 residues: Probable ECF RNA polymerase sigma factor SigI (290 aa).

Residues 11–74 (WRAHRAYLVD…LCLDHIKSAS (64 aa)) are sigma-70 factor domain-2. The Polymerase core binding signature appears at 34–37 (DMVQ). Residues 110 to 162 (LALLIMLERLGPAERVVFVLHEIFGLPYQQIATTIGSQASTCRQLAHRARRKI) form a sigma-70 factor domain-4_2 region. The H-T-H motif DNA-binding region spans 137-156 (YQQIATTIGSQASTCRQLAH).

It belongs to the sigma-70 factor family. ECF subfamily. In terms of assembly, interacts transiently with the RNA polymerase catalytic core formed by RpoA, RpoB, RpoC and RpoZ (2 alpha, 1 beta, 1 beta' and 1 omega subunit) to form the RNA polymerase holoenzyme that can initiate transcription.

In terms of biological role, sigma factors are initiation factors that promote the attachment of RNA polymerase to specific initiation sites and are then released. Extracytoplasmic function (ECF) sigma factors are held in an inactive form by a cognate anti-sigma factor until released, although no anti-sigma factor is known for this protein. This is Probable ECF RNA polymerase sigma factor SigI (sigI) from Mycobacterium tuberculosis (strain CDC 1551 / Oshkosh).